Reading from the N-terminus, the 109-residue chain is N-cym protein (109 aa).

Interacts with MYCN and GSK3B. As to expression, expressed in the neuronal cells of the cerebrum and cerebellum, spermatocytes of the testis, pancreatic cells and also the heart. Expressed in both primary and metastatic neuroblastomas and in thyroid tumors (at protein level). Expression is associated with poor prognosis in neuroblastoma. Expressed in the fetal brain, lung, liver and kidney at varying low levels.

It is found in the cytoplasm. The protein localises to the nucleus. Functionally, regulates stability of MYCN in neuroblastoma cells by inhibiting GSK3B-mediated MYCN phosphorylation. Inhibits GSK3B activity by promoting its phosphorylation at 'Ser-9'. The chain is N-cym protein (MYCNOS) from Homo sapiens (Human).